The following is a 444-amino-acid chain: Phosphoglucosamine mutase (444 aa).

Ser104 serves as the catalytic Phosphoserine intermediate. Residues Ser104, Asp243, Asp245, and Asp247 each contribute to the Mg(2+) site. Ser104 is modified (phosphoserine).

It belongs to the phosphohexose mutase family. Mg(2+) serves as cofactor. In terms of processing, activated by phosphorylation.

The enzyme catalyses alpha-D-glucosamine 1-phosphate = D-glucosamine 6-phosphate. In terms of biological role, catalyzes the conversion of glucosamine-6-phosphate to glucosamine-1-phosphate. The protein is Phosphoglucosamine mutase of Neisseria meningitidis serogroup A / serotype 4A (strain DSM 15465 / Z2491).